The sequence spans 208 residues: Thymidylate kinase (208 aa).

ATP is bound at residue 11–18 (GTEGVGKT).

Belongs to the thymidylate kinase family.

It catalyses the reaction dTMP + ATP = dTDP + ADP. Phosphorylation of dTMP to form dTDP in both de novo and salvage pathways of dTTP synthesis. The sequence is that of Thymidylate kinase from Psychrobacter sp. (strain PRwf-1).